Here is a 98-residue protein sequence, read N- to C-terminus: Protein Vpr (98 aa).

The segment at 1-42 (MEQLPEDQGPQREPYNEWTLEILEELKREAVRHFPRDWLHQL) is homooligomerization. Residues serine 79 and serine 98 each carry the phosphoserine; by host modification.

The protein belongs to the HIV-1 VPR protein family. In terms of assembly, homooligomer, may form homodimer. Interacts with p6-gag region of the Pr55 Gag precursor protein through a (Leu-X-X)4 motif near the C-terminus of the P6gag protein. Interacts with host UNG. May interact with host RAD23A/HHR23A. Interacts with host VPRBP/DCAF1, leading to hijack the CUL4A-RBX1-DDB1-DCAF1/VPRBP complex, mediating ubiquitination of host proteins such as TERT and ZGPAT and arrest of the cell cycle in G2 phase. Post-translationally, phosphorylated on several residues by host. These phosphorylations regulate VPR activity for the nuclear import of the HIV-1 pre-integration complex.

It is found in the virion. The protein localises to the host nucleus. Its subcellular location is the host extracellular space. Its function is as follows. During virus replication, may deplete host UNG protein, and incude G2-M cell cycle arrest. Acts by targeting specific host proteins for degradation by the 26S proteasome, through association with the cellular CUL4A-DDB1 E3 ligase complex by direct interaction with host VPRPB/DCAF-1. Cell cycle arrest reportedly occurs within hours of infection and is not blocked by antiviral agents, suggesting that it is initiated by the VPR carried into the virion. Additionally, VPR induces apoptosis in a cell cycle dependent manner suggesting that these two effects are mechanistically linked. Detected in the serum and cerebrospinal fluid of AIDS patient, VPR may also induce cell death to bystander cells. In terms of biological role, during virus entry, plays a role in the transport of the viral pre-integration (PIC) complex to the host nucleus. This function is crucial for viral infection of non-dividing macrophages. May act directly at the nuclear pore complex, by binding nucleoporins phenylalanine-glycine (FG)-repeat regions. The protein is Protein Vpr of Pan troglodytes (Chimpanzee).